A 954-amino-acid chain; its full sequence is Mycolic acid-containing lipids exporter MmpL11 (954 aa).

A run of 12 helical transmembrane segments spans residues 11 to 31 (FRWA…YLAL), 188 to 208 (IVLI…LPLV), 214 to 234 (VVVT…SVFV), 235 to 255 (TSTV…FILM), 279 to 299 (GLAV…IYLI), 312 to 334 (ILAV…ATFG), 373 to 393 (AIAA…MVLG), 529 to 549 (TQPL…LVSI), 559 to 579 (VLMT…VFQW), 597 to 617 (IPPL…IFLL), 648 to 668 (AALI…PLVA), and 670 to 690 (LGVA…LVLV).

It is found in the cell inner membrane. In terms of biological role, contributes to cell wall biosynthesis and biofilm formation. Transports the mycolic acid-containing lipids monomeromycolyl diacylglycerol (MMDAG) and mycolate ester wax (WE) to the bacterial surface. The protein is Mycolic acid-containing lipids exporter MmpL11 of Mycolicibacterium smegmatis (strain ATCC 700084 / mc(2)155) (Mycobacterium smegmatis).